We begin with the raw amino-acid sequence, 231 residues long: Cytochrome c oxidase subunit 2 (231 aa).

At 1–14 (MAHPAQLGLQNATS) the chain is on the mitochondrial intermembrane side. A helical transmembrane segment spans residues 15–45 (PIMEELIAFHDHALMIIFLISSLVLYIISLM). At 46 to 59 (LTTKLTHTSTMNAQ) the chain is on the mitochondrial matrix side. The chain crosses the membrane as a helical span at residues 60–87 (EIEMVWTILPAIILIMIALPSLRILYMT). The Mitochondrial intermembrane portion of the chain corresponds to 88-231 (DEFNKPYLTL…WASYLYIVSL (144 aa)). Cu cation is bound by residues His161, Cys196, Glu198, Cys200, His204, and Met207. Glu198 provides a ligand contact to Mg(2+).

Belongs to the cytochrome c oxidase subunit 2 family. Component of the cytochrome c oxidase (complex IV, CIV), a multisubunit enzyme composed of 14 subunits. The complex is composed of a catalytic core of 3 subunits MT-CO1, MT-CO2 and MT-CO3, encoded in the mitochondrial DNA, and 11 supernumerary subunits COX4I, COX5A, COX5B, COX6A, COX6B, COX6C, COX7A, COX7B, COX7C, COX8 and NDUFA4, which are encoded in the nuclear genome. The complex exists as a monomer or a dimer and forms supercomplexes (SCs) in the inner mitochondrial membrane with NADH-ubiquinone oxidoreductase (complex I, CI) and ubiquinol-cytochrome c oxidoreductase (cytochrome b-c1 complex, complex III, CIII), resulting in different assemblies (supercomplex SCI(1)III(2)IV(1) and megacomplex MCI(2)III(2)IV(2)). Found in a complex with TMEM177, COA6, COX18, COX20, SCO1 and SCO2. Interacts with TMEM177 in a COX20-dependent manner. Interacts with COX20. Interacts with COX16. Cu cation is required as a cofactor.

It localises to the mitochondrion inner membrane. The enzyme catalyses 4 Fe(II)-[cytochrome c] + O2 + 8 H(+)(in) = 4 Fe(III)-[cytochrome c] + 2 H2O + 4 H(+)(out). Its function is as follows. Component of the cytochrome c oxidase, the last enzyme in the mitochondrial electron transport chain which drives oxidative phosphorylation. The respiratory chain contains 3 multisubunit complexes succinate dehydrogenase (complex II, CII), ubiquinol-cytochrome c oxidoreductase (cytochrome b-c1 complex, complex III, CIII) and cytochrome c oxidase (complex IV, CIV), that cooperate to transfer electrons derived from NADH and succinate to molecular oxygen, creating an electrochemical gradient over the inner membrane that drives transmembrane transport and the ATP synthase. Cytochrome c oxidase is the component of the respiratory chain that catalyzes the reduction of oxygen to water. Electrons originating from reduced cytochrome c in the intermembrane space (IMS) are transferred via the dinuclear copper A center (CU(A)) of subunit 2 and heme A of subunit 1 to the active site in subunit 1, a binuclear center (BNC) formed by heme A3 and copper B (CU(B)). The BNC reduces molecular oxygen to 2 water molecules using 4 electrons from cytochrome c in the IMS and 4 protons from the mitochondrial matrix. This chain is Cytochrome c oxidase subunit 2 (MT-CO2), found in Lagothrix lagotricha (Brown woolly monkey).